A 130-amino-acid chain; its full sequence is Sec-independent protein translocase protein TatB (130 aa).

The chain crosses the membrane as a helical span at residues 1–21 (MFDIGFWELVLIFVVGLVVLG). The disordered stretch occupies residues 85–130 (LKQAAQSVNRPYADVSAKNEATSSSSSDATHQTEATKTSAANTKSE). Residues 112–130 (DATHQTEATKTSAANTKSE) show a composition bias toward polar residues.

The protein belongs to the TatB family. The Tat system comprises two distinct complexes: a TatABC complex, containing multiple copies of TatA, TatB and TatC subunits, and a separate TatA complex, containing only TatA subunits. Substrates initially bind to the TatABC complex, which probably triggers association of the separate TatA complex to form the active translocon.

The protein localises to the cell inner membrane. Functionally, part of the twin-arginine translocation (Tat) system that transports large folded proteins containing a characteristic twin-arginine motif in their signal peptide across membranes. Together with TatC, TatB is part of a receptor directly interacting with Tat signal peptides. TatB may form an oligomeric binding site that transiently accommodates folded Tat precursor proteins before their translocation. The chain is Sec-independent protein translocase protein TatB from Vibrio vulnificus (strain CMCP6).